Reading from the N-terminus, the 68-residue chain is Large ribosomal subunit protein bL31 (68 aa).

Positions 16, 18, 37, and 40 each coordinate Zn(2+).

Belongs to the bacterial ribosomal protein bL31 family. Type A subfamily. As to quaternary structure, part of the 50S ribosomal subunit. The cofactor is Zn(2+).

Binds the 23S rRNA. The protein is Large ribosomal subunit protein bL31 of Aquifex aeolicus (strain VF5).